The following is a 628-amino-acid chain: Basal cell adhesion molecule (628 aa).

A signal peptide spans 1-31; it reads MEPPDAPAQARGAPRLLLLAVLLAAHPDAQA. 2 consecutive Ig-like V-type domains span residues 32–142 and 147–257; these read EVRL…ARLN and PEAT…PTFH. Residues 32 to 547 lie on the Extracellular side of the membrane; the sequence is EVRLSVPPLV…GTVSPQTSQA (516 aa). Intrachain disulfides connect Cys-53/Cys-125, Cys-172/Cys-237, and Cys-291/Cys-337. 3 consecutive Ig-like C2-type domains span residues 274–355, 363–441, and 448–541; these read PSTP…KTLE, PLEL…QNFT, and PELK…GTVS. An interaction with laminin alpha5 region spans residues 309–312; it reads EQEE. N-linked (GlcNAc...) asparagine glycans are attached at residues Asn-321, Asn-377, Asn-383, Asn-419, and Asn-439. Cys-384 and Cys-424 are oxidised to a cystine. Cys-473 and Cys-522 are disulfide-bonded. Residues 548–568 form a helical membrane-spanning segment; sequence GVAVMAVAVSVGLLLLVVAVF. Over 569 to 628 the chain is Cytoplasmic; that stretch reads YCVRRKGGPCCRQRREKGAPPPGEPGLSHSGSEQPEQTGLLMGGASGGARGGSGGFGDEC. The tract at residues 579 to 628 is disordered; sequence CRQRREKGAPPPGEPGLSHSGSEQPEQTGLLMGGASGGARGGSGGFGDEC. Ser-596 carries the post-translational modification Phosphoserine; by GSK3. A Phosphoserine; by CK2 modification is found at Ser-598. Ser-600 is subject to Phosphoserine. Gly residues predominate over residues 609 to 628; sequence LMGGASGGARGGSGGFGDEC. Position 621 is a phosphoserine; by PKA or PKB/AKT1 (Ser-621).

Homodimer. Interacts with ITGA4:ITGB1. Interacts with spectrins SPTA1 and SPTB1. Epinephrine-stimulated phosphorylation of Ser-621 by PKA enhances adhesion to laminin. Ser-621 can also be phosphorylated by AKT1. Wide tissue distribution (highest in the pancreas and very low in brain). Closely associated with the basal layer of cells in epithelia and the endothelium of blood vessel walls.

It localises to the cell membrane. Its function is as follows. Transmembrane glycoprotein that functions as both a receptor and an adhesion molecule playing a crucial role in cell adhesion, motility, migration and invasion. Extracellular domain enables binding to extracellular matrix proteins, such as laminin, integrin and other ligands while its intracellular domain interacts with cytoskeletal proteins like hemoglobin, facilitating cell signal transduction. Serves as a receptor for laminin alpha-5/LAMA5 to promote cell adhesion. Mechanistically, JAK2 induces BCAM phosphorylation and activates its adhesion to laminin by stimulating a Rap1/AKT signaling pathway in the absence of EPOR. The chain is Basal cell adhesion molecule (BCAM) from Homo sapiens (Human).